Here is a 630-residue protein sequence, read N- to C-terminus: Betaine/ectoine transporter LcoP (630 aa).

Polar residues predominate over residues 1-13; the sequence is MSTNSGNNLPESQ. Residues 1 to 28 form a disordered region; the sequence is MSTNSGNNLPESQESPEEPHYPHDTHPG. A compositionally biased stretch (basic and acidic residues) spans 17-26; that stretch reads EEPHYPHDTH. 12 helical membrane passes run 47–67, 85–105, 125–145, 177–197, 230–250, 267–287, 299–319, 354–374, 385–405, 436–456, 479–499, and 510–530; these read TVFG…ISSP, TGWL…YIAF, FSWI…FFGP, FHWG…LAYS, MAII…AIQV, ILIA…VSGV, ISLT…LFLL, WTAF…MFIA, FALI…TIFG, LPLY…FFVT, LIVV…LLTG, and LTIL…IAFI. A disordered region spans residues 611–630; that stretch reads WADGWTPESTEEGEVDAKKD.

It belongs to the BCCT transporter (TC 2.A.15) family.

The protein resides in the cell membrane. Uptake is activated by hyperosmotic stress. Shows a small but significant chill stimulation around 15 degrees Celsius. Functionally, involved in the uptake of osmoprotectants. Can transport betaine and ectoine. Na(+) is probably the coupling ion. This is Betaine/ectoine transporter LcoP from Corynebacterium glutamicum (strain ATCC 13032 / DSM 20300 / JCM 1318 / BCRC 11384 / CCUG 27702 / LMG 3730 / NBRC 12168 / NCIMB 10025 / NRRL B-2784 / 534).